The primary structure comprises 673 residues: Bifunctional polymyxin resistance protein ArnA (673 aa).

The tract at residues 1 to 311 (MKAIVFAYHD…EMGMVPQARL (311 aa)) is formyltransferase ArnAFT. Catalysis depends on H104, which acts as the Proton donor; for formyltransferase activity. (6R)-10-formyltetrahydrofolate is bound by residues R114 and 136-140 (VSRAD). The interval 321–673 (RRTRVLILGV…HTADATDTQG (353 aa)) is dehydrogenase ArnADH. Residues D354 and 375–376 (DI) each bind NAD(+). UDP-alpha-D-glucuronate-binding positions include A400, Y405, and 439–440 (TS). E441 acts as the Proton acceptor; for decarboxylase activity in catalysis. Residues R467, N499, 533–542 (KLVDGGAQKR), and Y620 contribute to the UDP-alpha-D-glucuronate site. R626 (proton donor; for decarboxylase activity) is an active-site residue.

It in the N-terminal section; belongs to the Fmt family. UDP-L-Ara4N formyltransferase subfamily. This sequence in the C-terminal section; belongs to the NAD(P)-dependent epimerase/dehydratase family. UDP-glucuronic acid decarboxylase subfamily. Homohexamer, formed by a dimer of trimers.

It catalyses the reaction UDP-alpha-D-glucuronate + NAD(+) = UDP-beta-L-threo-pentopyranos-4-ulose + CO2 + NADH. It carries out the reaction UDP-4-amino-4-deoxy-beta-L-arabinose + (6R)-10-formyltetrahydrofolate = UDP-4-deoxy-4-formamido-beta-L-arabinose + (6S)-5,6,7,8-tetrahydrofolate + H(+). Its pathway is nucleotide-sugar biosynthesis; UDP-4-deoxy-4-formamido-beta-L-arabinose biosynthesis; UDP-4-deoxy-4-formamido-beta-L-arabinose from UDP-alpha-D-glucuronate: step 1/3. It functions in the pathway nucleotide-sugar biosynthesis; UDP-4-deoxy-4-formamido-beta-L-arabinose biosynthesis; UDP-4-deoxy-4-formamido-beta-L-arabinose from UDP-alpha-D-glucuronate: step 3/3. It participates in bacterial outer membrane biogenesis; lipopolysaccharide biosynthesis. Its function is as follows. Bifunctional enzyme that catalyzes the oxidative decarboxylation of UDP-glucuronic acid (UDP-GlcUA) to UDP-4-keto-arabinose (UDP-Ara4O) and the addition of a formyl group to UDP-4-amino-4-deoxy-L-arabinose (UDP-L-Ara4N) to form UDP-L-4-formamido-arabinose (UDP-L-Ara4FN). The modified arabinose is attached to lipid A and is required for resistance to polymyxin and cationic antimicrobial peptides. This chain is Bifunctional polymyxin resistance protein ArnA, found in Pectobacterium atrosepticum (strain SCRI 1043 / ATCC BAA-672) (Erwinia carotovora subsp. atroseptica).